We begin with the raw amino-acid sequence, 177 residues long: Acireductone dioxygenase (177 aa).

Residues 1–23 (MVRAWYMDDSDADQRAPHMTDPP) are disordered. Fe(2+) contacts are provided by His86, His88, Glu92, and His131. Ni(2+) contacts are provided by His86, His88, Glu92, and His131.

This sequence belongs to the acireductone dioxygenase (ARD) family. Fe(2+) serves as cofactor. It depends on Ni(2+) as a cofactor.

The protein localises to the cytoplasm. It localises to the nucleus. The catalysed reaction is 1,2-dihydroxy-5-(methylsulfanyl)pent-1-en-3-one + O2 = 4-methylsulfanyl-2-oxobutanoate + formate + 2 H(+). It catalyses the reaction 1,2-dihydroxy-5-(methylsulfanyl)pent-1-en-3-one + O2 = 3-(methylsulfanyl)propanoate + CO + formate + 2 H(+). The protein operates within amino-acid biosynthesis; L-methionine biosynthesis via salvage pathway; L-methionine from S-methyl-5-thio-alpha-D-ribose 1-phosphate: step 5/6. In terms of biological role, catalyzes 2 different reactions between oxygen and the acireductone 1,2-dihydroxy-3-keto-5-methylthiopentene (DHK-MTPene) depending upon the metal bound in the active site. Fe-containing acireductone dioxygenase (Fe-ARD) produces formate and 2-keto-4-methylthiobutyrate (KMTB), the alpha-ketoacid precursor of methionine in the methionine recycle pathway. Ni-containing acireductone dioxygenase (Ni-ARD) produces methylthiopropionate, carbon monoxide and formate, and does not lie on the methionine recycle pathway. This chain is Acireductone dioxygenase, found in Branchiostoma floridae (Florida lancelet).